We begin with the raw amino-acid sequence, 392 residues long: Succinyl-diaminopimelate desuccinylase (392 aa).

Position 75 (histidine 75) interacts with Zn(2+). The active site involves aspartate 77. Position 108 (aspartate 108) interacts with Zn(2+). The Proton acceptor role is filled by glutamate 147. Zn(2+) contacts are provided by glutamate 148, glutamate 176, and histidine 365.

It belongs to the peptidase M20A family. DapE subfamily. As to quaternary structure, homodimer. Requires Zn(2+) as cofactor. It depends on Co(2+) as a cofactor.

It catalyses the reaction N-succinyl-(2S,6S)-2,6-diaminopimelate + H2O = (2S,6S)-2,6-diaminopimelate + succinate. The protein operates within amino-acid biosynthesis; L-lysine biosynthesis via DAP pathway; LL-2,6-diaminopimelate from (S)-tetrahydrodipicolinate (succinylase route): step 3/3. Functionally, catalyzes the hydrolysis of N-succinyl-L,L-diaminopimelic acid (SDAP), forming succinate and LL-2,6-diaminopimelate (DAP), an intermediate involved in the bacterial biosynthesis of lysine and meso-diaminopimelic acid, an essential component of bacterial cell walls. This chain is Succinyl-diaminopimelate desuccinylase, found in Rhodopseudomonas palustris (strain BisB18).